The primary structure comprises 473 residues: MNKKIYTQVVVIGSGPAGYSAAFRCADLGLDTVLIERYDKLGGVCLNVGCIPSKTLLHIAKVIKEAKELHKTGVSFNKPDIDIKKIKNWKQHIVNKLTDGLSSMRKKRKIRIFQGHAIFETDKSLCVTNTEDKFTIFFDNAIIATGSKPIKIPSIPHDDIRIWDSTDALSLKKIPNNFLIIGSGIIGLEMATIYSALGSKVDIIDRFNHFLPVIDEDISSIYKKSINQQFNLMLNTHIDKVEVKKDALIVDMIHENIPKKNILYDAVLVAIGRTPNIDSLGLDRIGLKINNFGFIQVNNQLKTNIPHIYAIGDVAGTPMLAHKGVHEGHIAAEVISGKNHYFEPKVIPSIAYTDPEIAWVGLSEKEAKQENINYEVAIFPWNASGRAIASNCSIGKTKLIFNKQNNKIIGGSIVGSNAGELIGEVGLAIEMGCDAEDIALTIHAHPTLSESIGLSAEVFQGTVTDVLNFKLNK.

FAD contacts are provided by residues E36–C45, K54, and A117. The cysteines at positions 45 and 50 are disulfide-linked. Residues G182–I186, D205, and A270–R273 contribute to the NAD(+) site. Positions 313 and 321 each coordinate FAD. Catalysis depends on H445, which acts as the Proton acceptor.

Belongs to the class-I pyridine nucleotide-disulfide oxidoreductase family. Homodimer. FAD serves as cofactor.

It localises to the cytoplasm. The catalysed reaction is N(6)-[(R)-dihydrolipoyl]-L-lysyl-[protein] + NAD(+) = N(6)-[(R)-lipoyl]-L-lysyl-[protein] + NADH + H(+). Lipoamide dehydrogenase is a component of the alpha-ketoacid dehydrogenase complexes. This chain is Dihydrolipoyl dehydrogenase (lpdA), found in Buchnera aphidicola subsp. Acyrthosiphon pisum (strain APS) (Acyrthosiphon pisum symbiotic bacterium).